A 633-amino-acid chain; its full sequence is Kelch-like protein diablo (633 aa).

A disordered region spans residues 1 to 62; it reads MGDLPGSTGG…ARLSHTSEKH (62 aa). The span at 7–25 shows a compositional bias: gly residues; that stretch reads STGGGGGVGGGGNGGGGPT. Residues 26 to 45 show a composition bias toward low complexity; sequence IAGTNGNSTTGPGSSTGSTG. Positions 80 to 147 constitute a BTB domain; it reads CDVVLNVGGR…CYTAHIIVEE (68 aa). The region spanning 182 to 284 is the BACK domain; the sequence is CLGIRAFADT…SPKFLVGTVG (103 aa). 6 Kelch repeats span residues 331 to 377, 379 to 425, 426 to 472, 474 to 519, 521 to 566, and 567 to 613; these read VLFA…VLND, LYAV…VLDG, FLYA…VLGG, LYAI…VFNN, IYAV…VVNG, and QLYA…VMRA.

It participates in protein modification; protein ubiquitination. Its function is as follows. Probable substrate-specific adapter of an E3 ubiquitin-protein ligase complex which mediates the ubiquitination and subsequent proteasomal degradation of target proteins. May have a role in synapse differentiation and growth. In Drosophila ananassae (Fruit fly), this protein is Kelch-like protein diablo.